We begin with the raw amino-acid sequence, 339 residues long: MWFYSVPEVIIGVESTAHTFSLGLVSGGRVLGQVGKTYVPPAGRGIHPREAAEHHAKAAPQLFRKLIEEFNVSLGDVEAVAYSAGPGLGPALRVGAVFARALAIKLGVPLVPVHHGVAHVEIARYATGSCDPLVLLISGGHTVVAGFSDGRYRVFGETLDVAIGNAIDMFAREVGLGFPGVPAVEKCAEAAEELVAFPMPIVGQDLSYAGLTTYALQLVKRGIPLPVVCRSLVETAYYMLAEVTERALAFTKKRELVVAGGVARSRRLREILYEVGREHGAEVKFVPDEYAGDNGAMIALTGYYAYRRGIAVEPGESFVRQRWRLDTVDVPWFYDLCNR.

2 residues coordinate Fe cation: H115 and H119. Residues 136–140, D168, E185, and S265 contribute to the substrate site; that span reads LISGG. Fe cation is bound at residue D293.

It belongs to the KAE1 / TsaD family. Requires Fe(2+) as cofactor.

The protein resides in the cytoplasm. The catalysed reaction is L-threonylcarbamoyladenylate + adenosine(37) in tRNA = N(6)-L-threonylcarbamoyladenosine(37) in tRNA + AMP + H(+). Functionally, required for the formation of a threonylcarbamoyl group on adenosine at position 37 (t(6)A37) in tRNAs that read codons beginning with adenine. Is probably involved in the transfer of the threonylcarbamoyl moiety of threonylcarbamoyl-AMP (TC-AMP) to the N6 group of A37. The chain is tRNA N6-adenosine threonylcarbamoyltransferase from Pyrobaculum calidifontis (strain DSM 21063 / JCM 11548 / VA1).